The sequence spans 147 residues: uncharacterized protein (147 aa).

The N-terminal stretch at 1–21 (MRTIFVGVLLLAIMGEGRLCA) is a signal peptide.

This is an uncharacterized protein from Treponema pallidum (strain Nichols).